Reading from the N-terminus, the 436-residue chain is tRNA(Ile)-lysidine synthase (436 aa).

Residue 21–26 (SGGVDS) coordinates ATP.

This sequence belongs to the tRNA(Ile)-lysidine synthase family.

Its subcellular location is the cytoplasm. The enzyme catalyses cytidine(34) in tRNA(Ile2) + L-lysine + ATP = lysidine(34) in tRNA(Ile2) + AMP + diphosphate + H(+). Functionally, ligates lysine onto the cytidine present at position 34 of the AUA codon-specific tRNA(Ile) that contains the anticodon CAU, in an ATP-dependent manner. Cytidine is converted to lysidine, thus changing the amino acid specificity of the tRNA from methionine to isoleucine. This chain is tRNA(Ile)-lysidine synthase, found in Aster yellows witches'-broom phytoplasma (strain AYWB).